We begin with the raw amino-acid sequence, 524 residues long: Bifunctional NAD(P)H-hydrate repair enzyme Nnr (524 aa).

The segment at 1-219 (MKVARVSEIK…ISYPRALLED (219 aa)) is NAD(P)H-hydrate epimerase. In terms of domain architecture, YjeF N-terminal spans 9–218 (IKLLDREAAE…HISYPRALLE (210 aa)). The NADPHX 1; for epimerase activity stretch occupies residues 57-61 (NNGGD). Positions 58 and 128 each coordinate K(+). Positions 132–138 (GTGLSRP) are NADPHX 1; for epimerase activity. (6S)-NADPHX is bound by residues Tyr-143 and Asp-161. Ser-164 contributes to the K(+) binding site. A YjeF C-terminal domain is found at 224-507 (VETNDPVPLP…NYLPKALRAL (284 aa)). The segment at 224–524 (VETNDPVPLP…LERYTIKVLP (301 aa)) is ADP-dependent (S)-NAD(P)H-hydrate dehydratase. (6S)-NADPHX is bound at residue Gly-330. The tract at residues 381-387 (HAGEMSR) is NADPHX 2; for dehydratase activity. Residues 418-422 (KGAHT) and 438-447 (NPGMATAGSG) contribute to the ADP site. Asp-448 is a (6S)-NADPHX binding site.

It in the N-terminal section; belongs to the NnrE/AIBP family. This sequence in the C-terminal section; belongs to the NnrD/CARKD family. The cofactor is K(+).

It carries out the reaction (6S)-NADHX + ADP = AMP + phosphate + NADH + H(+). It catalyses the reaction (6S)-NADPHX + ADP = AMP + phosphate + NADPH + H(+). The catalysed reaction is (6R)-NADHX = (6S)-NADHX. The enzyme catalyses (6R)-NADPHX = (6S)-NADPHX. Functionally, bifunctional enzyme that catalyzes the epimerization of the S- and R-forms of NAD(P)HX and the dehydration of the S-form of NAD(P)HX at the expense of ADP, which is converted to AMP. This allows the repair of both epimers of NAD(P)HX, a damaged form of NAD(P)H that is a result of enzymatic or heat-dependent hydration. The chain is Bifunctional NAD(P)H-hydrate repair enzyme Nnr (nnr) from Thermofilum pendens (strain DSM 2475 / Hrk 5).